A 388-amino-acid polypeptide reads, in one-letter code: Succinate--CoA ligase [ADP-forming] subunit beta (388 aa).

The ATP-grasp domain maps to 9–244 (KQLFAEYGLP…PSQDDPREAH (236 aa)). Residues K46, 53-55 (GRG), E99, T102, and E107 contribute to the ATP site. Residues N199 and D213 each coordinate Mg(2+). Residues N264 and 321–323 (GIV) contribute to the substrate site.

Belongs to the succinate/malate CoA ligase beta subunit family. Heterotetramer of two alpha and two beta subunits. Mg(2+) is required as a cofactor.

It carries out the reaction succinate + ATP + CoA = succinyl-CoA + ADP + phosphate. The catalysed reaction is GTP + succinate + CoA = succinyl-CoA + GDP + phosphate. Its pathway is carbohydrate metabolism; tricarboxylic acid cycle; succinate from succinyl-CoA (ligase route): step 1/1. In terms of biological role, succinyl-CoA synthetase functions in the citric acid cycle (TCA), coupling the hydrolysis of succinyl-CoA to the synthesis of either ATP or GTP and thus represents the only step of substrate-level phosphorylation in the TCA. The beta subunit provides nucleotide specificity of the enzyme and binds the substrate succinate, while the binding sites for coenzyme A and phosphate are found in the alpha subunit. The chain is Succinate--CoA ligase [ADP-forming] subunit beta from Aeromonas hydrophila subsp. hydrophila (strain ATCC 7966 / DSM 30187 / BCRC 13018 / CCUG 14551 / JCM 1027 / KCTC 2358 / NCIMB 9240 / NCTC 8049).